The primary structure comprises 61 residues: LECHNQQSSQAPTTKTCSGETNCYKKWWSDHRGTIIERGCGCPKVKPGVKLNCCRTDRCNN.

Intrachain disulfides connect cysteine 3–cysteine 23, cysteine 17–cysteine 40, cysteine 42–cysteine 53, and cysteine 54–cysteine 59.

It belongs to the three-finger toxin family. Short-chain subfamily. Type I alpha-neurotoxin sub-subfamily. In terms of tissue distribution, expressed by the venom gland.

Its subcellular location is the secreted. Its function is as follows. Binds to muscle nicotinic acetylcholine receptor (nAChR) and inhibit acetylcholine from binding to the receptor, thereby impairing neuromuscular transmission. This chain is Short neurotoxin 1, found in Naja philippinensis (Philippine cobra).